The following is an 879-amino-acid chain: Alanine--tRNA ligase (879 aa).

Positions 566, 570, 668, and 672 each coordinate Zn(2+).

This sequence belongs to the class-II aminoacyl-tRNA synthetase family. Zn(2+) is required as a cofactor.

The protein resides in the cytoplasm. The catalysed reaction is tRNA(Ala) + L-alanine + ATP = L-alanyl-tRNA(Ala) + AMP + diphosphate. Catalyzes the attachment of alanine to tRNA(Ala) in a two-step reaction: alanine is first activated by ATP to form Ala-AMP and then transferred to the acceptor end of tRNA(Ala). Also edits incorrectly charged Ser-tRNA(Ala) and Gly-tRNA(Ala) via its editing domain. This is Alanine--tRNA ligase from Clostridium perfringens (strain 13 / Type A).